The sequence spans 242 residues: Probable transcriptional regulatory protein BamMC406_2210 (242 aa).

This sequence belongs to the TACO1 family.

The protein resides in the cytoplasm. The chain is Probable transcriptional regulatory protein BamMC406_2210 from Burkholderia ambifaria (strain MC40-6).